A 55-amino-acid chain; its full sequence is Large ribosomal subunit protein bL33 (55 aa).

Belongs to the bacterial ribosomal protein bL33 family.

In Kocuria rhizophila (strain ATCC 9341 / DSM 348 / NBRC 103217 / DC2201), this protein is Large ribosomal subunit protein bL33.